We begin with the raw amino-acid sequence, 671 residues long: Heat shock transcription factor hsf-1 (671 aa).

Composition is skewed to low complexity over residues 1-17 (MQPTGNQIQQNQQQQQQ) and 38-52 (QQAPPNRPPRQNHQN). Residues 1-61 (MQPTGNQIQQ…NGAIGGKKSS (61 aa)) are disordered. Positions 89–196 (LPVFLIKLWN…LLSQIKRKQS (108 aa)) are DNA-binding domain. A coiled-coil region spans residues 206 to 240 (NEQTQQNLEVVMAEMRAMREKAKNMEDKMNKLTKE). Disordered regions lie at residues 329 to 423 (QEPF…PLTH), 437 to 493 (YQGA…VNNY), 526 to 552 (HHPTTSTSSTNADPHQNLYSPTLGLSP), and 612 to 671 (NAPE…PNLV). Residues 370–386 (GAQSSRYSDGGATSSRE) show a composition bias toward polar residues. Over residues 439-456 (GASPASGGPSTSSSAPSG) the composition is skewed to low complexity. 2 stretches are compositionally biased toward polar residues: residues 474-493 (ATRQMAQPQQDYSGGFVNNY) and 528-552 (PTTSTSSTNADPHQNLYSPTLGLSP).

Belongs to the HSF family. Forms homodimers and homotrimers. Component of the DHIC (ddl-1-containing hsf-1 inhibitory complex), which contains at least ddl-1, ddl-2, hsb-1 and hsf-1. Within the complex, interacts with ddl-1. Formation of the DHIC may be dependent upon the Insulin/IGF-1-like signaling (IIS) mediated pathway. Post-translationally, phosphorylated. In terms of processing, sumoylated. Sumoylation may inhibit transcriptional activity in response to heat shock. As to expression, expressed in intestinal cells, body wall muscle cells, and hypodermal cells, as well as many neurons in the head and tail.

It is found in the nucleus. It localises to the cytoplasm. Its function is as follows. Functions as a stress-inducible and DNA-binding transcription factor, playing a central role in the transcriptional activation of the heat shock response (HSR), leading to the expression of a large class of molecular chaperones, heat shock proteins (HSPs), that protect cells from cellular insult damage. Upon exposure to heat and other stress stimuli, activates gene transcription through binding to site-specific heat shock elements (HSEs) present in the promoter regions of target genes, such as the HSPs. Binds to inverted 5'-NGAAN-3' pentamer DNA sequences in HSEs. Involved in positive modulation of expression of heat shock protein hsp-16.2 in response to heat shock; may act in concert with homeodomain-interacting protein kinase hpk-1. In response to heat shock or starvation, required for the modulation of lifespan, and protection against aberrant protein aggregation proteotoxicity; may act in parallel with the Insulin/IGF-1-like signaling (IIS) mediated pathway. Plays a role in modulating autophagy, in response to a moderate and short-term heat shock, also known as a hormetic heat shock. Involved in positive modulation of ascaroside pheromone biosynthesis in response to heat shock, perhaps by directly activating transcription of peroxisomal fatty acid beta-oxidation genes. Required in modulating the response to infection by either Gram-negative or Gram-positive bacteria, perhaps acting via regulation of expression of Hsp90/daf-21 and members of the small heat shock protein (HSP20) family. May play a role downstream of the daf-16/FOXO and daf-2 signaling pathway in response to bacterial pathogens. Modulates expression of multiple microRNA genes, in both heat shock-dependent and -independent manner. Independent of heat shock, required to modulate expression of genes involved in larval development, mainly distinct from HSPs; acts in concert with putative transcription factor efl-1/E2F, which may form part of a multiprotein DRM complex. Independent of heat shock, involved in promoting death of the linker cell, a male-specific cell which guides the elongation of the gonad; perhaps acting by modulating expression of ubiquitin-conjugating enzyme let-70. Plays a role in egg-laying. This is Heat shock transcription factor hsf-1 from Caenorhabditis elegans.